Reading from the N-terminus, the 172-residue chain is 16S rRNA aminocarboxypropyltransferase (172 aa).

Residues threonine 21, leucine 71, leucine 93, and threonine 112 each coordinate S-adenosyl-L-methionine.

The protein belongs to the TDD superfamily. TSR3 family.

It localises to the cytoplasm. It catalyses the reaction an N(1)-methylpseudouridine in rRNA + S-adenosyl-L-methionine = N(1)-methyl-N(3)-[(3S)-3-amino-3-carboxypropyl]pseudouridine in rRNA + S-methyl-5'-thioadenosine + H(+). Aminocarboxypropyltransferase that catalyzes the aminocarboxypropyl transfer on pseudouridine at position 914 in 16S rRNA. It constitutes the last step in biosynthesis of the hypermodified N1-methyl-N3-(3-amino-3-carboxypropyl) pseudouridine (m1acp3-Psi). This chain is 16S rRNA aminocarboxypropyltransferase, found in Methanocaldococcus jannaschii (strain ATCC 43067 / DSM 2661 / JAL-1 / JCM 10045 / NBRC 100440) (Methanococcus jannaschii).